The primary structure comprises 301 residues: GTPase Era (301 aa).

An Era-type G domain is found at 11–180; that stretch reads RSGIITLVGR…KDVFFENCLN (170 aa). The segment at 19 to 26 is G1; sequence GRPNVGKS. A GTP-binding site is contributed by 19 to 26; it reads GRPNVGKS. The segment at 45–49 is G2; the sequence is QTTRR. The tract at residues 66–69 is G3; the sequence is DTPG. GTP contacts are provided by residues 66-70 and 129-132; these read DTPGI and TKID. Positions 129-132 are G4; the sequence is TKID. Residues 159–161 form a G5 region; sequence VSA. The KH type-2 domain maps to 210–286; it reads LEQEIPHSLL…YLRLIVKVVK (77 aa).

The protein belongs to the TRAFAC class TrmE-Era-EngA-EngB-Septin-like GTPase superfamily. Era GTPase family. Monomer.

Its subcellular location is the cytoplasm. It is found in the cell membrane. Its function is as follows. An essential GTPase that binds both GDP and GTP, with rapid nucleotide exchange. Plays a role in 16S rRNA processing and 30S ribosomal subunit biogenesis and possibly also in cell cycle regulation and energy metabolism. This chain is GTPase Era, found in Tropheryma whipplei (strain TW08/27) (Whipple's bacillus).